Consider the following 277-residue polypeptide: MKLKGEAVLITGGASGLGRALVDRFVAEGAKVAVLDKSAERLAELETDHGDNVLGIVGDVRSLEDQKQAASRCVARFGKIDTLIPNAGIWDYSTALVDLPEESLDAAFDEVFHINVKGYIHAVKACLPALVASRGNVIFTISNAGFYPNGGGPLYTAAKHAIVGLVRELAFELAPYVRVNGVGSGGINSDLRGPSSLGMGSKAISTVPLADMLKSVLPIGRMPEVEEYTGAYVFFATRGDAAPATGALLNYDGGLGVRGFFSGAGGNDLLEQLNIHP.

NAD(+) is bound by residues 9-36 (LITG…AVLD) and Asp-59. Residue Ser-142 participates in substrate binding. Tyr-155 acts as the Proton acceptor in catalysis. Lys-159 serves as a coordination point for NAD(+).

It belongs to the short-chain dehydrogenases/reductases (SDR) family.

The enzyme catalyses (2R,3S)-3-phenylcyclohexa-3,5-diene-1,2-diol + NAD(+) = biphenyl-2,3-diol + NADH + H(+). Its pathway is xenobiotic degradation; biphenyl degradation; 2-hydroxy-2,4-pentadienoate and benzoate from biphenyl: step 2/4. This Paraburkholderia xenovorans (strain LB400) protein is Cis-2,3-dihydrobiphenyl-2,3-diol dehydrogenase (bphB).